The sequence spans 432 residues: Trigger factor (432 aa).

In terms of domain architecture, PPIase FKBP-type spans 161–246 (EDRVTIDFTG…LKKVEERELP (86 aa)).

The protein belongs to the FKBP-type PPIase family. Tig subfamily.

It is found in the cytoplasm. The catalysed reaction is [protein]-peptidylproline (omega=180) = [protein]-peptidylproline (omega=0). Its function is as follows. Involved in protein export. Acts as a chaperone by maintaining the newly synthesized protein in an open conformation. Functions as a peptidyl-prolyl cis-trans isomerase. The polypeptide is Trigger factor (Citrobacter koseri (strain ATCC BAA-895 / CDC 4225-83 / SGSC4696)).